The sequence spans 271 residues: Homeobox protein pal-1 (271 aa).

Disordered regions lie at residues 1-25 (MSVD…TNVN), 100-135 (PPLS…ASSS), and 178-202 (GSAG…TNNV). Composition is skewed to low complexity over residues 100 to 117 (PPLS…YPSP) and 125 to 135 (STSSGIGASSS). A compositionally biased stretch (polar residues) spans 189–202 (DTKSLPTGPGTNNV). A DNA-binding region (homeobox) is located at residues 207–266 (ADKYRMVYSDYQRLELEKEFHTSAFITSDRKSQLSTMLSLTERQIKIWFQNRRAKDRRDK).

The protein belongs to the Caudal homeobox family. As to quaternary structure, interacts with tir-1 and let-756.

The protein resides in the nucleus. Its subcellular location is the chromosome. It is found in the centromere. It localises to the kinetochore. In terms of biological role, transcriptional activator. Interacts with promoter regions for tbx-8.9, tbx-9, elt-1, hnd-1, scrt-1, and vab-7 genes. Binds the sequence ATTTATGAC. Binds to the enhancer region of the hlh-1 gene promoter during embryonic body wall muscle development. Activates the gene for mab-5 in embryo development. Necessary for vab-7 expression in C blastomeres in the posterior of embryos. Required for posterior V6 neuroectoblast cell fate specification during postembryonic neurogenesis (patterning) which generates the characteristic ray lineage during male tail development. Binds to ced-3 promoter and activated expression which is crucial for tail-spike cell death. Has a role in E cell specification in endoderm development and body wall muscle development. This chain is Homeobox protein pal-1, found in Caenorhabditis briggsae.